The following is a 191-amino-acid chain: Molybdenum cofactor guanylyltransferase (191 aa).

GTP is bound by residues Leu13–Gly15, Lys26, Asp72, and Asp102. Residue Asp102 participates in Mg(2+) binding.

It belongs to the MobA family. In terms of assembly, monomer. It depends on Mg(2+) as a cofactor.

Its subcellular location is the cytoplasm. It carries out the reaction Mo-molybdopterin + GTP + H(+) = Mo-molybdopterin guanine dinucleotide + diphosphate. Functionally, transfers a GMP moiety from GTP to Mo-molybdopterin (Mo-MPT) cofactor (Moco or molybdenum cofactor) to form Mo-molybdopterin guanine dinucleotide (Mo-MGD) cofactor. The chain is Molybdenum cofactor guanylyltransferase from Pseudomonas entomophila (strain L48).